The sequence spans 278 residues: Undecaprenyl-diphosphatase (278 aa).

The next 8 membrane-spanning stretches (helical) occupy residues 3-23, 42-62, 88-108, 112-132, 152-172, 190-210, 225-245, and 253-273; these read YILIGVILGIVQGISEWIPIS, VAYSFGLFMEIGTIAAAIFYF, FLVIVTIITGLVGVPLYLFVI, ILGLPMTVLGVVLLIDGIVIY, IIIVGIAQGLAALPGVSRSGM, LSFISLIPAALGAISVTVLFS, GLLISIVVATFVSIFFINALL, and VVLLVIILGIMAIISGILSDI.

The protein belongs to the UppP family.

The protein resides in the cell membrane. The enzyme catalyses di-trans,octa-cis-undecaprenyl diphosphate + H2O = di-trans,octa-cis-undecaprenyl phosphate + phosphate + H(+). Its function is as follows. Catalyzes the dephosphorylation of undecaprenyl diphosphate (UPP). The chain is Undecaprenyl-diphosphatase from Saccharolobus solfataricus (strain ATCC 35092 / DSM 1617 / JCM 11322 / P2) (Sulfolobus solfataricus).